Consider the following 275-residue polypeptide: ATP synthase subunit a (275 aa).

7 helical membrane-spanning segments follow: residues 46 to 66 (RLML…VIAM), 104 to 124 (FLPV…ASII), 135 to 155 (IGMP…VGIK), 166 to 186 (SIVV…IEFI), 204 to 224 (MLAG…FFFV), 231 to 251 (IFGV…LLVI), and 252 to 272 (FLQA…ALHA).

Belongs to the ATPase A chain family. In terms of assembly, F-type ATPases have 2 components, CF(1) - the catalytic core - and CF(0) - the membrane proton channel. CF(1) has five subunits: alpha(3), beta(3), gamma(1), delta(1), epsilon(1). CF(0) has three main subunits: a(1), b(2) and c(9-12). The alpha and beta chains form an alternating ring which encloses part of the gamma chain. CF(1) is attached to CF(0) by a central stalk formed by the gamma and epsilon chains, while a peripheral stalk is formed by the delta and b chains.

The protein localises to the cell membrane. Its function is as follows. Key component of the proton channel; it plays a direct role in the translocation of protons across the membrane. The chain is ATP synthase subunit a from Rhodococcus erythropolis (strain PR4 / NBRC 100887).